A 243-amino-acid chain; its full sequence is Thaumatin-like protein (243 aa).

An N-terminal signal peptide occupies residues 1 to 20 (MASINLFLFAFLLLLSHASA). 8 cysteine pairs are disulfide-bonded: Cys-29/Cys-238, Cys-77/Cys-87, Cys-92/Cys-98, Cys-144/Cys-228, Cys-149/Cys-211, Cys-157/Cys-174, Cys-178/Cys-187, and Cys-188/Cys-198.

It belongs to the thaumatin family.

This Arabidopsis thaliana (Mouse-ear cress) protein is Thaumatin-like protein.